A 405-amino-acid polypeptide reads, in one-letter code: Chalcone synthase (405 aa).

Cysteine 170 is a catalytic residue.

This sequence belongs to the thiolase-like superfamily. Chalcone/stilbene synthases family.

It carries out the reaction (E)-4-coumaroyl-CoA + 3 malonyl-CoA + 3 H(+) = 2',4,4',6'-tetrahydroxychalcone + 3 CO2 + 4 CoA. It participates in secondary metabolite biosynthesis; flavonoid biosynthesis. Its function is as follows. The primary product of this enzyme is 4,2',4',6'-tetrahydroxychalcone (also termed naringenin-chalcone or chalcone) which can under specific conditions spontaneously isomerize into naringenin. This Equisetum arvense (Field horsetail) protein is Chalcone synthase (CHS).